A 74-amino-acid chain; its full sequence is Probable molt-inhibiting hormone (74 aa).

3 disulfide bridges follow: cysteine 6-cysteine 43, cysteine 23-cysteine 39, and cysteine 26-cysteine 52. Position 74 is an alanine amide (alanine 74).

Its subcellular location is the secreted. Its function is as follows. Inhibits Y-organs where molting hormone (ecdysteroid) is secreted. A molting cycle is initiated when MIH secretion diminishes or stops. Has little or no hyperglycemic activity. The protein is Probable molt-inhibiting hormone of Jasus lalandii (Cape rock lobster).